Reading from the N-terminus, the 185-residue chain is MSSSMSTLRNQFLIAMPHLKDPNFEGTISYICDHNDEGAMGIVINRPLDIRLSDMLAQLELGGEGIAMPVYSGGPVQIERGFVLHSPLGDWQSSIEIAPDICITTSKDILEAMARGVGPDRTLVALGYAGWGAGQLEKEISNNFWITCPADSAIIFRTPDSEKVVSALGRVGIDYHRLSSISGHA.

This sequence belongs to the UPF0301 (AlgH) family.

This chain is UPF0301 protein HCH_00550, found in Hahella chejuensis (strain KCTC 2396).